A 603-amino-acid chain; its full sequence is Baeyer-Villiger monooxygenase (603 aa).

FAD is bound by residues E94, 102-105 (TWYW), D114, Y120, and V164. 112-114 (HCD) contacts NADP(+). Residues 248–254 (TGATGVQ), 271–272 (RT), and 386–387 (KR) each bind NADP(+).

The protein belongs to the FAD-binding monooxygenase family. Requires FAD as cofactor.

Its function is as follows. Catalyzes a Baeyer-Villiger oxidation reaction, i.e. the insertion of an oxygen atom into a carbon-carbon bond adjacent to a carbonyl, which converts ketones to esters or lactones using NADPH and/or NADH as an electron donor. Thus, can convert bicyclo[3.2.0]hept-2-en-6-one into the oxidative lactone products 2-oxabicyclo[3.3.0]oct-6-en-3-one and 3-oxabicyclo[3.3.0]oct-6-en-2-one. Is also able to catalyze the sulfoxidation of methyl phenyl sulfide (thioanisole). The sequence is that of Baeyer-Villiger monooxygenase from Streptomyces coelicolor (strain ATCC BAA-471 / A3(2) / M145).